The primary structure comprises 131 residues: Large ribosomal subunit protein eL32 (131 aa).

It belongs to the eukaryotic ribosomal protein eL32 family. As to quaternary structure, component of the large ribosomal subunit (LSU). Mature N.crassa ribosomes consist of a small (40S) and a large (60S) subunit. The 40S small subunit contains 1 molecule of ribosomal RNA (18S rRNA) and at least 32 different proteins. The large 60S subunit contains 3 rRNA molecules (26S, 5.8S and 5S rRNA) and at least 42 different proteins.

It is found in the cytoplasm. Functionally, component of the ribosome, a large ribonucleoprotein complex responsible for the synthesis of proteins in the cell. The small ribosomal subunit (SSU) binds messenger RNAs (mRNAs) and translates the encoded message by selecting cognate aminoacyl-transfer RNA (tRNA) molecules. The large subunit (LSU) contains the ribosomal catalytic site termed the peptidyl transferase center (PTC), which catalyzes the formation of peptide bonds, thereby polymerizing the amino acids delivered by tRNAs into a polypeptide chain. The nascent polypeptides leave the ribosome through a tunnel in the LSU and interact with protein factors that function in enzymatic processing, targeting, and the membrane insertion of nascent chains at the exit of the ribosomal tunnel. This is Large ribosomal subunit protein eL32 (crp-63) from Neurospora crassa (strain ATCC 24698 / 74-OR23-1A / CBS 708.71 / DSM 1257 / FGSC 987).